The chain runs to 350 residues: Dihydroorotate dehydrogenase (quinone) (350 aa).

Residues 67–71 and glycine 91 contribute to the FMN site; that span reads AGFDK. Lysine 71 serves as a coordination point for substrate. 116 to 120 contributes to the substrate binding site; that stretch reads NRMGF. Residues asparagine 144 and asparagine 177 each coordinate FMN. Residue asparagine 177 coordinates substrate. Residue serine 180 is the Nucleophile of the active site. Residue asparagine 182 coordinates substrate. FMN contacts are provided by lysine 213 and threonine 241. Residue 242–243 participates in substrate binding; that stretch reads NT. Residues 249–268 form a disordered region; it reads ASLHSDAADEEGGLSGAPIT. Residues glycine 264, glycine 291, and 312-313 each bind FMN; that span reads YT.

The protein belongs to the dihydroorotate dehydrogenase family. Type 2 subfamily. As to quaternary structure, monomer. The cofactor is FMN.

It is found in the cell membrane. It carries out the reaction (S)-dihydroorotate + a quinone = orotate + a quinol. It participates in pyrimidine metabolism; UMP biosynthesis via de novo pathway; orotate from (S)-dihydroorotate (quinone route): step 1/1. In terms of biological role, catalyzes the conversion of dihydroorotate to orotate with quinone as electron acceptor. The polypeptide is Dihydroorotate dehydrogenase (quinone) (Natronomonas pharaonis (strain ATCC 35678 / DSM 2160 / CIP 103997 / JCM 8858 / NBRC 14720 / NCIMB 2260 / Gabara) (Halobacterium pharaonis)).